Here is a 361-residue protein sequence, read N- to C-terminus: Septin-2 (361 aa).

Position 17 is a phosphotyrosine (Tyr17). In terms of domain architecture, Septin-type G spans 34-306 (KGFEFTLMVV…ENFRSERLKR (273 aa)). The interval 44-51 (GESGLGKS) is G1 motif. GTP is bound by residues 44 to 52 (GESGLGKST), Thr78, Gly104, and 183 to 186 (KADT). The tract at residues 101–104 (DTPG) is G3 motif. The segment at 182 to 185 (AKAD) is G4 motif. Lys190 bears the N6-acetyllysine mark. Tyr211 carries the phosphotyrosine modification. Position 218 is a phosphoserine (Ser218). GTP-binding residues include Gly241, Arg256, and Tyr258. The important for dimerization stretch occupies residues 260–270 (WGVVEVENPEH).

This sequence belongs to the TRAFAC class TrmE-Era-EngA-EngB-Septin-like GTPase superfamily. Septin GTPase family. As to quaternary structure, septins polymerize into heterooligomeric protein complexes that form filaments, and associate with cellular membranes, actin filaments and microtubules. GTPase activity is required for filament formation. Septin filaments are assembled from asymmetrical heterotrimers, composed of SEPTIN2, SEPTIN6 and SEPTIN7 that associate head-to-head to form a hexameric unit. Interaction between SEPTIN2 and SEPTIN7 seems indirect. Also interacts with SEPTIN9 and SEPTIN5. Interaction with SEPTIN4 not detected. Component of a septin core octameric complex consisting of SEPTIN12, SEPTIN7, SEPTIN6 and SEPTIN2 or SEPTIN4 in the order 12-7-6-2-2-6-7-12 or 12-7-6-4-4-6-7-12 and located in the sperm annulus. Interacts with MAP4. Interacts with DZIP1L. As to expression, widely expressed.

It localises to the cytoplasm. It is found in the cytoskeleton. The protein resides in the spindle. The protein localises to the chromosome. Its subcellular location is the centromere. It localises to the kinetochore. It is found in the cleavage furrow. The protein resides in the midbody. The protein localises to the cell cortex. Its subcellular location is the cell projection. It localises to the cilium membrane. It is found in the cilium. The protein resides in the flagellum. In terms of biological role, filament-forming cytoskeletal GTPase. Forms a filamentous structure with SEPTIN12, SEPTIN6, SEPTIN2 and probably SEPTIN4 at the sperm annulus which is required for the structural integrity and motility of the sperm tail during postmeiotic differentiation. Required for normal organization of the actin cytoskeleton. Plays a role in the biogenesis of polarized columnar-shaped epithelium by maintaining polyglutamylated microtubules, thus facilitating efficient vesicle transport, and by impeding MAP4 binding to tubulin. Required for the progression through mitosis. Forms a scaffold at the midplane of the mitotic splindle required to maintain CENPE localization at kinetochores and consequently chromosome congression. During anaphase, may be required for chromosome segregation and spindle elongation. Plays a role in ciliogenesis and collective cell movements. In cilia, required for the integrity of the diffusion barrier at the base of the primary cilium that prevents diffusion of transmembrane proteins between the cilia and plasma membranes: probably acts by regulating the assembly of the tectonic-like complex (also named B9 complex) by localizing TMEM231 protein. This is Septin-2 from Mus musculus (Mouse).